The sequence spans 187 residues: NADH-quinone oxidoreductase subunit B (187 aa).

Positions 66, 67, 131, and 161 each coordinate [4Fe-4S] cluster.

Belongs to the complex I 20 kDa subunit family. NDH-1 is composed of 14 different subunits. Subunits NuoB, C, D, E, F, and G constitute the peripheral sector of the complex. [4Fe-4S] cluster is required as a cofactor.

It is found in the cell inner membrane. It catalyses the reaction a quinone + NADH + 5 H(+)(in) = a quinol + NAD(+) + 4 H(+)(out). Its function is as follows. NDH-1 shuttles electrons from NADH, via FMN and iron-sulfur (Fe-S) centers, to quinones in the respiratory chain. The immediate electron acceptor for the enzyme in this species is believed to be ubiquinone. Couples the redox reaction to proton translocation (for every two electrons transferred, four hydrogen ions are translocated across the cytoplasmic membrane), and thus conserves the redox energy in a proton gradient. This is NADH-quinone oxidoreductase subunit B from Methylocella silvestris (strain DSM 15510 / CIP 108128 / LMG 27833 / NCIMB 13906 / BL2).